A 360-amino-acid polypeptide reads, in one-letter code: Photosystem II protein D1 (360 aa).

A run of 3 helical transmembrane segments spans residues 29 to 46, 118 to 133, and 142 to 156; these read YIGW…TATS, HFLL…EWEL, and WISV…AAAA. H118 is a binding site for chlorophyll a. Y126 lines the pheophytin a pocket. [CaMn4O5] cluster-binding residues include D170 and E189. Residues 197-218 form a helical membrane-spanning segment; it reads FHQLGVAGVFGGSLFSAMHGSL. H198 provides a ligand contact to chlorophyll a. A quinone-binding positions include H215 and 264-265; that span reads SF. A Fe cation-binding site is contributed by H215. H272 is a Fe cation binding site. A helical membrane pass occupies residues 274–288; sequence FLGAWPVVGIWLTSM. [CaMn4O5] cluster contacts are provided by H332, E333, D342, and A344. A propeptide spanning residues 345-360 is cleaved from the precursor; that stretch reads SGDSCPVALVAPSING.

Belongs to the reaction center PufL/M/PsbA/D family. As to quaternary structure, PSII is composed of 1 copy each of membrane proteins PsbA, PsbB, PsbC, PsbD, PsbE, PsbF, PsbH, PsbI, PsbJ, PsbK, PsbL, PsbM, PsbT, PsbX, PsbY, PsbZ, Psb30/Ycf12, at least 3 peripheral proteins of the oxygen-evolving complex and a large number of cofactors. It forms dimeric complexes. The cofactor is The D1/D2 heterodimer binds P680, chlorophylls that are the primary electron donor of PSII, and subsequent electron acceptors. It shares a non-heme iron and each subunit binds pheophytin, quinone, additional chlorophylls, carotenoids and lipids. D1 provides most of the ligands for the Mn4-Ca-O5 cluster of the oxygen-evolving complex (OEC). There is also a Cl(-1) ion associated with D1 and D2, which is required for oxygen evolution. The PSII complex binds additional chlorophylls, carotenoids and specific lipids.. Tyr-161 forms a radical intermediate that is referred to as redox-active TyrZ, YZ or Y-Z. Post-translationally, C-terminally processed by CTPA; processing is essential to allow assembly of the oxygen-evolving complex and thus photosynthetic growth.

It localises to the plastid. It is found in the chloroplast thylakoid membrane. It carries out the reaction 2 a plastoquinone + 4 hnu + 2 H2O = 2 a plastoquinol + O2. Functionally, photosystem II (PSII) is a light-driven water:plastoquinone oxidoreductase that uses light energy to abstract electrons from H(2)O, generating O(2) and a proton gradient subsequently used for ATP formation. It consists of a core antenna complex that captures photons, and an electron transfer chain that converts photonic excitation into a charge separation. The D1/D2 (PsbA/PsbD) reaction center heterodimer binds P680, the primary electron donor of PSII as well as several subsequent electron acceptors. This is Photosystem II protein D1 from Palmaria palmata (Dulse).